A 413-amino-acid chain; its full sequence is Na(+)-translocating NADH-quinone reductase subunit B (413 aa).

3 helical membrane passes run 56-76, 123-143, and 169-189; these read MMIL…YNVG, LLGA…GGFW, and IVPP…GVVI. Threonine 236 is modified (FMN phosphoryl threonine). A run of 5 helical transmembrane segments spans residues 270 to 290, 297 to 317, 322 to 342, 358 to 378, and 381 to 401; these read GSIG…IIFG, IVAG…WIGS, LFAM…GMIF, WWYG…NPAY, and GMML…YVVV.

Belongs to the NqrB/RnfD family. Composed of six subunits; NqrA, NqrB, NqrC, NqrD, NqrE and NqrF. It depends on FMN as a cofactor.

Its subcellular location is the cell inner membrane. It carries out the reaction a ubiquinone + n Na(+)(in) + NADH + H(+) = a ubiquinol + n Na(+)(out) + NAD(+). In terms of biological role, NQR complex catalyzes the reduction of ubiquinone-1 to ubiquinol by two successive reactions, coupled with the transport of Na(+) ions from the cytoplasm to the periplasm. NqrA to NqrE are probably involved in the second step, the conversion of ubisemiquinone to ubiquinol. This Yersinia pestis protein is Na(+)-translocating NADH-quinone reductase subunit B.